A 485-amino-acid polypeptide reads, in one-letter code: Pre-glycoprotein polyprotein GP complex (485 aa).

The N-myristoyl glycine; by host moiety is linked to residue glycine 2. The Extracellular portion of the chain corresponds to 2–17 (GQFISFMQEIPTFLQE). Residues 18–33 (ALNIALVAVSLIAIIK) form a helical membrane-spanning segment. The Cytoplasmic portion of the chain corresponds to 34–58 (GVVNLYKSGLFQFFVFLALAGRSCT). Cysteine 57 provides a ligand contact to Zn(2+). Residues 59–424 (EEAFKIGLHT…QGKTPLTLVD (366 aa)) are Extracellular-facing. 6 cysteine pairs are disulfide-bonded: cysteine 92–cysteine 226, cysteine 135–cysteine 164, cysteine 207–cysteine 213, cysteine 271–cysteine 284, cysteine 293–cysteine 302, and cysteine 356–cysteine 377. Residues asparagine 95 and asparagine 105 are each glycosylated (N-linked (GlcNAc...) asparagine; by host). Residues asparagine 166 and asparagine 178 are each glycosylated (N-linked (GlcNAc...) asparagine; by host). The fusion stretch occupies residues 250 to 286 (LKAFFSWSLTDSSGKDTPGGYCLEEWMLVAAKMKCFG). Residues 287–355 (NTAVAKCNLN…KIRELMSVPY (69 aa)) form an HR1 region. N-linked (GlcNAc...) asparagine; by host glycosylation is found at asparagine 357, asparagine 365, asparagine 382, and asparagine 387. Residues 360–423 (KFWYVNHTLS…RQGKTPLTLV (64 aa)) form an HR2 region. The helical transmembrane segment at 425-445 (ICFWSTVFFTASLFLHLVGIP) threads the bilayer. Over 446 to 485 (THRHIRGEACPLPHRLNSLGGCRCGKYPNLKKPTVWRRGH) the chain is Cytoplasmic. Residues histidine 447, histidine 449, cysteine 455, histidine 459, cysteine 467, cysteine 469, and histidine 485 each contribute to the Zn(2+) site.

It belongs to the arenaviridae GPC protein family. In terms of assembly, interacts with glycoprotein G2. Part of the GP complex (GP-C) together with glycoprotein G1 and glycoprotein G2. The GP-complex interacts with protein Z, which interacts with ribonucleocapsid; these interactions may induce virion budding. As to quaternary structure, homotrimer; disulfide-linked. In pre-fusion state, G1 homotrimers bind G2 homotrimers via ionic interactions. Part of the GP complex (GP-C) together with glycoprotein G2 and the stable signal peptide. Interacts with host TFRC. The GP-complex interacts with protein Z, which interacts with ribonucleocapsid; these interactions may induce virion budding. Homotrimer. Interacts with the stable signal peptide. In pre-fusion state, G2 homotrimers bind G1 homotrimers via ionic interactions. Part of the GP complex (GP-C) together with glycoprotein G1 and the stable signal peptide. Acidification in the endosome triggers rearrangements, which ultimately leads to a 6 helix bundle formed by the two heptad repeat domains (HR1 and HR2) in post-fusion state. The GP-complex interacts with protein Z, which interacts with ribonucleocapsid; these interactions may induce virion budding. In terms of processing, specific enzymatic cleavages in vivo yield mature proteins. GP-C polyprotein is cleaved in the endoplasmic reticulum by the host protease MBTPS1. Only cleaved glycoprotein is incorporated into virions. The SSP remains stably associated with the GP complex following cleavage by signal peptidase and plays crucial roles in the trafficking of GP through the secretory pathway. Post-translationally, myristoylation is necessary for GP2-mediated fusion activity.

The protein localises to the virion membrane. It is found in the host endoplasmic reticulum membrane. It localises to the host Golgi apparatus membrane. Its subcellular location is the host cell membrane. Its function is as follows. Functions as a cleaved signal peptide that is retained as the third component of the GP complex (GP-C). Helps to stabilize the spike complex in its native conformation. The SSP is required for efficient glycoprotein expression, post-translational maturation cleavage of G1 and G2, glycoprotein transport to the cell surface plasma membrane, formation of infectious virus particles, and acid pH-dependent glycoprotein-mediated cell fusion. In terms of biological role, forms the virion spikes together with glycoprotein G2. The glycoprotein spike trimers are connected to the underlying matrix. Mediates virus attachment to host TFRC. This attachment induces virion internalization predominantly through clathrin-mediated endocytosis. Forms the virion spikes together with glycoprotein G1. The glycoprotein spike trimers are connected to the underlying matrix. Class I viral fusion protein that directs fusion of viral and host endosomal membranes, leading to delivery of the nucleocapsid into the cytoplasm. Membrane fusion is mediated by irreversible conformational changes induced by acidification. In Junin mammarenavirus (JUNV), this protein is Pre-glycoprotein polyprotein GP complex.